The sequence spans 267 residues: MQTRTTPGAMLKAMREKPPLVQCITNYVAMNIAANVLLAAGASPAMVHAAEEAGEFAAIASALTINIGTLSTQWIDGMQAAAKAATSAGKPWVLDPVAHYATAFRRNAVAELLALKPTIIRGNASEIIALAGGESRGQGVDSRDPVEQAEGSARWLAERQRAVVAVTGAVDFVTDGERAVRIEGGSALMPQVTALGCSLTCLVGAFAATAPEDIFGATVAALSTFAIAGEEAALGAAGPGSFSWRFLDALAALDAETLDARARISAA.

Position 46 (M46) interacts with substrate. 2 residues coordinate ATP: R121 and T167. Substrate is bound at residue A194.

The protein belongs to the Thz kinase family. Mg(2+) serves as cofactor.

The catalysed reaction is 5-(2-hydroxyethyl)-4-methylthiazole + ATP = 4-methyl-5-(2-phosphooxyethyl)-thiazole + ADP + H(+). Its pathway is cofactor biosynthesis; thiamine diphosphate biosynthesis; 4-methyl-5-(2-phosphoethyl)-thiazole from 5-(2-hydroxyethyl)-4-methylthiazole: step 1/1. Catalyzes the phosphorylation of the hydroxyl group of 4-methyl-5-beta-hydroxyethylthiazole (THZ). This chain is Hydroxyethylthiazole kinase, found in Rhizobium johnstonii (strain DSM 114642 / LMG 32736 / 3841) (Rhizobium leguminosarum bv. viciae).